A 324-amino-acid chain; its full sequence is NADH-ubiquinone oxidoreductase chain 1 (324 aa).

8 helical membrane passes run 9–29 (LINP…LTLV), 75–95 (ILFL…WAPM), 106–126 (LGIL…LGSG), 146–166 (ISYE…SGGY), 178–198 (TWLL…TLAE), 212–232 (ELVS…FFLA), 259–279 (ELMT…FLWM), and 299–319 (FLPI…ALAG).

It belongs to the complex I subunit 1 family. In terms of assembly, core subunit of respiratory chain NADH dehydrogenase (Complex I) which is composed of 45 different subunits.

The protein resides in the mitochondrion inner membrane. The enzyme catalyses a ubiquinone + NADH + 5 H(+)(in) = a ubiquinol + NAD(+) + 4 H(+)(out). In terms of biological role, core subunit of the mitochondrial membrane respiratory chain NADH dehydrogenase (Complex I) which catalyzes electron transfer from NADH through the respiratory chain, using ubiquinone as an electron acceptor. Essential for the catalytic activity and assembly of complex I. The chain is NADH-ubiquinone oxidoreductase chain 1 (mt-nd1) from Danio rerio (Zebrafish).